The sequence spans 120 residues: Chaperonin GroEL (120 aa).

Position 23–27 (23–27 (DGTTT)) interacts with ATP.

Belongs to the chaperonin (HSP60) family. As to quaternary structure, forms a cylinder of 14 subunits composed of two heptameric rings stacked back-to-back. Interacts with the co-chaperonin GroES.

The protein resides in the cytoplasm. The catalysed reaction is ATP + H2O + a folded polypeptide = ADP + phosphate + an unfolded polypeptide.. Functionally, together with its co-chaperonin GroES, plays an essential role in assisting protein folding. The GroEL-GroES system forms a nano-cage that allows encapsulation of the non-native substrate proteins and provides a physical environment optimized to promote and accelerate protein folding. This is Chaperonin GroEL from Mycobacterium malmoense.